The sequence spans 549 residues: Lipase 4 (549 aa).

Positions 1 to 15 (MKLALVLSLIVSVAA) are cleaved as a signal peptide. Cysteines 75 and 112 form a disulfide. The active-site Acyl-ester intermediate is S224. The cysteines at positions 283 and 292 are disulfide-linked. E356 acts as the Charge relay system in catalysis. An N-linked (GlcNAc...) asparagine glycan is attached at N366. Residue H464 is the Charge relay system of the active site.

Belongs to the type-B carboxylesterase/lipase family.

It catalyses the reaction a triacylglycerol + H2O = a diacylglycerol + a fatty acid + H(+). This chain is Lipase 4 (LIP4), found in Diutina rugosa (Yeast).